A 562-amino-acid polypeptide reads, in one-letter code: Arginine--tRNA ligase (562 aa).

The 'HIGH' region signature appears at 121–131 (PNIAKPISMGH).

This sequence belongs to the class-I aminoacyl-tRNA synthetase family. Monomer.

Its subcellular location is the cytoplasm. It carries out the reaction tRNA(Arg) + L-arginine + ATP = L-arginyl-tRNA(Arg) + AMP + diphosphate. The sequence is that of Arginine--tRNA ligase from Lactiplantibacillus plantarum (strain ATCC BAA-793 / NCIMB 8826 / WCFS1) (Lactobacillus plantarum).